The sequence spans 850 residues: Rho guanine nucleotide exchange factor 33 (850 aa).

Basic and acidic residues-rich tracts occupy residues 1-13 and 98-113; these read MEKS…ENEH and EEMQ…EKRR. Disordered regions lie at residues 1–21 and 98–209; these read MEKS…NPST and EEMQ…DENL. Residues 54–128 adopt a coiled-coil conformation; the sequence is LEEKVKSCRC…KAKKAQKEEH (75 aa). Residues 130 to 149 are compositionally biased toward low complexity; that stretch reads AQAGPASAPAPGSAPTQGSP. Polar residues predominate over residues 164-175; it reads DFTNMLPSQNYE. One can recognise a DH domain in the interval 273 to 448; sequence KRQTVALELL…RVFISHYTLL (176 aa). Disordered stretches follow at residues 504 to 550 and 702 to 850; these read EMLQ…WELE and AAQA…WGWW. Composition is skewed to low complexity over residues 510 to 520 and 754 to 770; these read PSSSSSAPAVS and APHG…GAPR. At Arg766 the chain carries Omega-N-methylarginine. A compositionally biased stretch (polar residues) spans 773–783; sequence FPQQRSQSEKQ. Residues 784–806 are compositionally biased toward basic and acidic residues; the sequence is TYLEEMHLEDATRFCPKEERESE. The segment covering 826–835 has biased composition (basic residues); that stretch reads SFRKLFKKKN.

The polypeptide is Rho guanine nucleotide exchange factor 33 (Arhgef33) (Mus musculus (Mouse)).